We begin with the raw amino-acid sequence, 162 residues long: uncharacterized protein (162 aa).

The next 4 membrane-spanning stretches (helical) occupy residues 10 to 30, 50 to 70, 96 to 116, and 125 to 145; these read ILSF…MLIL, IVEL…ALYN, IAQY…IILL, and FTAI…LFIF.

It localises to the cell membrane. This is an uncharacterized protein from Methanocaldococcus jannaschii (strain ATCC 43067 / DSM 2661 / JAL-1 / JCM 10045 / NBRC 100440) (Methanococcus jannaschii).